The primary structure comprises 178 residues: Large ribosomal subunit protein uL10 (178 aa).

This sequence belongs to the universal ribosomal protein uL10 family. In terms of assembly, part of the ribosomal stalk of the 50S ribosomal subunit. The N-terminus interacts with L11 and the large rRNA to form the base of the stalk. The C-terminus forms an elongated spine to which L12 dimers bind in a sequential fashion forming a multimeric L10(L12)X complex.

Functionally, forms part of the ribosomal stalk, playing a central role in the interaction of the ribosome with GTP-bound translation factors. This Thermosynechococcus vestitus (strain NIES-2133 / IAM M-273 / BP-1) protein is Large ribosomal subunit protein uL10.